We begin with the raw amino-acid sequence, 315 residues long: Methenyltetrahydromethanopterin cyclohydrolase (315 aa).

The protein belongs to the MCH family.

It localises to the cytoplasm. It catalyses the reaction 5,10-methenyl-5,6,7,8-tetrahydromethanopterin + H2O = N(5)-formyl-5,6,7,8-tetrahydromethanopterin + H(+). Its pathway is one-carbon metabolism; methanogenesis from CO(2); 5,10-methenyl-5,6,7,8-tetrahydromethanopterin from CO(2): step 3/3. Its function is as follows. Catalyzes the reversible interconversion of 5-formyl-H(4)MPT to methenyl-H(4)MPT(+). The protein is Methenyltetrahydromethanopterin cyclohydrolase of Methanoculleus marisnigri (strain ATCC 35101 / DSM 1498 / JR1).